The following is an 84-amino-acid chain: Dolichol phosphate-mannose biosynthesis regulatory protein (84 aa).

2 helical membrane-spanning segments follow: residues 11–31 (FGLV…VILL) and 49–69 (YAVL…GLFI).

The protein belongs to the DPM2 family. As to quaternary structure, component of the dolichol-phosphate mannose (DPM) synthase complex composed of DPM1, DPM2 and DPM3; in the complex interacts directly with DPM3. Component of the glycosylphosphatidylinositol-N-acetylglucosaminyltransferase (GPI-GnT) complex composed at least by PIGA, PIGC, PIGH, PIGP, PIGQ, PIGY and DPM2. Interacts with PIGA, PIGC and PIGQ.

Its subcellular location is the endoplasmic reticulum membrane. The protein operates within protein modification; protein glycosylation. In terms of biological role, regulates the biosynthesis of dolichol phosphate-mannose. Regulatory subunit of the dolichol-phosphate mannose (DPM) synthase complex; essential for the ER localization and stable expression of DPM1. Part of the glycosylphosphatidylinositol-N-acetylglucosaminyltransferase (GPI-GnT) complex that catalyzes the transfer of N-acetylglucosamine from UDP-N-acetylglucosamine to phosphatidylinositol and participates in the first step of GPI biosynthesis. May act by regulating the GPI-GNT complex. The protein is Dolichol phosphate-mannose biosynthesis regulatory protein of Mus musculus (Mouse).